The following is a 127-amino-acid chain: Ribosome-binding factor A (127 aa).

This sequence belongs to the RbfA family. As to quaternary structure, monomer. Binds 30S ribosomal subunits, but not 50S ribosomal subunits or 70S ribosomes.

The protein resides in the cytoplasm. In terms of biological role, one of several proteins that assist in the late maturation steps of the functional core of the 30S ribosomal subunit. Associates with free 30S ribosomal subunits (but not with 30S subunits that are part of 70S ribosomes or polysomes). Required for efficient processing of 16S rRNA. May interact with the 5'-terminal helix region of 16S rRNA. This is Ribosome-binding factor A from Stenotrophomonas maltophilia (strain K279a).